We begin with the raw amino-acid sequence, 908 residues long: Auxin response factor 6 (908 aa).

Residues 1–21 (MKLSPSAGGVSDQPPSPPEVA) form a disordered region. Residues 134–236 (FCKTLTASDT…QLLLGIRRAN (103 aa)) constitute a DNA-binding region (TF-B3). The tract at residues 525–556 (NEQKPQLQPQQQQQESHQQQPQHQQMQQQKHL) is disordered. Low complexity predominate over residues 526–556 (EQKPQLQPQQQQQESHQQQPQHQQMQQQKHL). The PB1 domain occupies 777 to 861 (ATFVKVYKSG…SCIKILSPQE (85 aa)).

The protein belongs to the ARF family. As to quaternary structure, homodimers and heterodimers.

Its subcellular location is the nucleus. In terms of biological role, auxin response factors (ARFs) are transcriptional factors that bind specifically to the DNA sequence 5'-TGTCTC-3' found in the auxin-responsive promoter elements (AuxREs). This Oryza sativa subsp. indica (Rice) protein is Auxin response factor 6 (ARF6).